A 51-amino-acid chain; its full sequence is Ribosome biogenesis protein Nop10 (51 aa).

Belongs to the NOP10 family.

Its function is as follows. Involved in ribosome biogenesis; more specifically in 18S rRNA pseudouridylation and in cleavage of pre-rRNA. In Methanococcus aeolicus (strain ATCC BAA-1280 / DSM 17508 / OCM 812 / Nankai-3), this protein is Ribosome biogenesis protein Nop10.